A 191-amino-acid polypeptide reads, in one-letter code: Protein 2 in picA locus (191 aa).

It belongs to the acyltransferase 3 family.

Its subcellular location is the cell membrane. Its function is as follows. Seems to regulate the surface properties of the bacterium in the presence of plant cells or plant cell extracts. The sequence is that of Protein 2 in picA locus from Rhizobium radiobacter (Agrobacterium tumefaciens).